A 359-amino-acid chain; its full sequence is Homoserine O-acetyltransferase (359 aa).

Residues 49-332 enclose the AB hydrolase-1 domain; it reads VLICHALTGS…QSSYGHDAFL (284 aa). Residue S143 is the Nucleophile of the active site. R212 is a binding site for substrate. Active-site residues include D299 and H328. Residue D329 participates in substrate binding.

It belongs to the AB hydrolase superfamily. MetX family. Homodimer.

Its subcellular location is the cytoplasm. It carries out the reaction L-homoserine + acetyl-CoA = O-acetyl-L-homoserine + CoA. It participates in amino-acid biosynthesis; L-methionine biosynthesis via de novo pathway; O-acetyl-L-homoserine from L-homoserine: step 1/1. Its function is as follows. Transfers an acetyl group from acetyl-CoA to L-homoserine, forming acetyl-L-homoserine. The chain is Homoserine O-acetyltransferase from Trichormus variabilis (strain ATCC 29413 / PCC 7937) (Anabaena variabilis).